The chain runs to 667 residues: Cyclin-dependent kinase 17 (667 aa).

Disordered regions lie at residues 1–70 and 85–184; these read MTAY…SSLN and DSEY…LRKM. 2 stretches are compositionally biased toward acidic residues: residues 99–111 and 119–144; these read EDFD…EFED and DEDD…ITPE. Residues 151–164 show a composition bias toward polar residues; the sequence is TGVTTQTTPPSNNT. The region spanning 328–609 is the Protein kinase domain; sequence YEKLDKLGEG…AAEAVKHPFL (282 aa). Residues 334–342 and Lys-357 each bind ATP; that span reads LGEGTYATV. Asp-449 acts as the Proton acceptor in catalysis. 2 residues coordinate Mg(2+): Asn-454 and Asp-467. The segment at 642–667 is disordered; sequence HHHSSRRHHRGTLVKDKYRMHSSHHT. Residues 644–653 are compositionally biased toward basic residues; the sequence is HSSRRHHRGT.

This sequence belongs to the protein kinase superfamily. CMGC Ser/Thr protein kinase family. CDC2/CDKX subfamily. In terms of assembly, interacts with cyy-1; the interaction is required to activate pct-1. Requires Mg(2+) as cofactor.

Its subcellular location is the cytoplasm. The protein resides in the cell projection. It localises to the dendrite. It is found in the axon. It carries out the reaction L-seryl-[protein] + ATP = O-phospho-L-seryl-[protein] + ADP + H(+). It catalyses the reaction L-threonyl-[protein] + ATP = O-phospho-L-threonyl-[protein] + ADP + H(+). Serine/threonine-protein kinase, which, in association with cyy-1, regulates the trafficking of synaptic vesicles in the DA9 motor neuron and probably also in the DD motor neurons and in RIA interneurons. In terms of biological role, sufficient for synaptic vesicle trafficking in the DA9 motor neuron. The protein is Cyclin-dependent kinase 17 of Caenorhabditis elegans.